The primary structure comprises 497 residues: Glutathione hydrolase 6 (497 aa).

The disordered stretch occupies residues 1 to 34 (MDATTGPVHYHKLQLWEPGVESEEEEEEEEEEIA). The Cytoplasmic segment spans residues 1-51 (MDATTGPVHYHKLQLWEPGVESEEEEEEEEEEIAEPLVLSLRRLQNTPRNE). Over residues 20–34 (VESEEEEEEEEEEIA) the composition is skewed to acidic residues. A helical; Signal-anchor for type II membrane protein membrane pass occupies residues 52–72 (VGGLPGAWARLLAGLLLLAVS). Residues 73–497 (SSLALRQLHS…PSGCCPFQGY (425 aa)) lie on the Extracellular side of the membrane. N-linked (GlcNAc...) asparagine glycosylation is found at Asn-164, Asn-169, Asn-367, and Asn-378.

It belongs to the gamma-glutamyltransferase family. In terms of assembly, heterodimer composed of the light and heavy chains. The active site is located in the light chain. In terms of processing, cleaved by autocatalysis into a large and a small subunit and the autocatalytic cleavage is essential to the functional activation of the enzyme.

Its subcellular location is the membrane. It catalyses the reaction an N-terminal (5-L-glutamyl)-[peptide] + an alpha-amino acid = 5-L-glutamyl amino acid + an N-terminal L-alpha-aminoacyl-[peptide]. The enzyme catalyses glutathione + H2O = L-cysteinylglycine + L-glutamate. The catalysed reaction is an S-substituted glutathione + H2O = an S-substituted L-cysteinylglycine + L-glutamate. Its pathway is sulfur metabolism; glutathione metabolism. Hydrolyzes and transfers gamma-glutamyl moieties from glutathione and other gamma-glutamyl compounds to acceptors. In Mus musculus (Mouse), this protein is Glutathione hydrolase 6.